The primary structure comprises 1238 residues: Virulence sensor protein BvgS (1238 aa).

A signal peptide spans 1 to 32 (MPAPHRLYPRSLICLAQALLAWALLAWAPAQA). Topologically, residues 33-307 (SQELTLVGKA…REQQWMADHP (275 aa)) are cytoplasmic. Residues 308 to 331 (VVKVAVLNLFAPFTLFRTDEQFGG) form a helical membrane-spanning segment. The Periplasmic segment spans residues 332–541 (ISAAVLQLLQ…PRTWYAYRNE (210 aa)). The helical transmembrane segment at 542–563 (IYLLIGLGLLSALLFLSWIVYL) threads the bilayer. The Cytoplasmic segment spans residues 564 to 1238 (RRQIRQRKRA…LEQRPHQDQP (675 aa)). The PAS domain occupies 580–651 (QLEFMRVLID…MHEFLLTRVA (72 aa)). In terms of domain architecture, PAC spans 652–708 (AEREPRFEDRDVTLHGRTRHVYQWTIPYGDSLGELKGIIGGWIDITERAELLRKLHD). In terms of domain architecture, Histidine kinase spans 726-948 (TMSHEIRTPM…TVSVDLRLTM (223 aa)). The residue at position 729 (H729) is a Phosphohistidine; by autocatalysis. Residues 974-1095 (RVLVVDDHKP…ALRQRLNEAV (122 aa)) enclose the Response regulatory domain. Position 1023 is a 4-aspartylphosphate (D1023). The region spanning 1133–1228 (DEALIRQLLE…AALETQLRAW (96 aa)) is the HPt domain. H1172 bears the Phosphohistidine mark.

Activation requires a sequential transfer of a phosphate group from a His in the primary transmitter domain, to an Asp in the receiver domain and to a His in the secondary transmitter domain.

It is found in the cell inner membrane. The enzyme catalyses ATP + protein L-histidine = ADP + protein N-phospho-L-histidine.. Member of the two-component regulatory system BvgS/BvgA. Phosphorylates BvgA via a four-step phosphorelay in response to environmental signals. This is Virulence sensor protein BvgS (bvgS) from Bordetella pertussis (strain Tohama I / ATCC BAA-589 / NCTC 13251).